The sequence spans 627 residues: tRNA uridine 5-carboxymethylaminomethyl modification enzyme MnmG (627 aa).

FAD-binding positions include 16–21, V128, and S183; that span reads GAGHAG. 277-291 is an NAD(+) binding site; sequence GPRYCPSIEDKIVRF. Residue Q374 participates in FAD binding.

This sequence belongs to the MnmG family. As to quaternary structure, homodimer. Heterotetramer of two MnmE and two MnmG subunits. FAD is required as a cofactor.

The protein resides in the cytoplasm. In terms of biological role, NAD-binding protein involved in the addition of a carboxymethylaminomethyl (cmnm) group at the wobble position (U34) of certain tRNAs, forming tRNA-cmnm(5)s(2)U34. This chain is tRNA uridine 5-carboxymethylaminomethyl modification enzyme MnmG, found in Finegoldia magna (strain ATCC 29328 / DSM 20472 / WAL 2508) (Peptostreptococcus magnus).